The sequence spans 236 residues: Large ribosomal subunit protein uL3 (236 aa).

Disordered regions lie at residues 132–153 (SNRA…GMAQ) and 200–236 (KGGD…KKGG). Over residues 133–145 (NRASHGNSRSHNV) the composition is skewed to polar residues. An N5-methylglutamine modification is found at glutamine 153. Polar residues predominate over residues 206–216 (VSPSIRSARPT). Over residues 217 to 228 (NNGNVNAAAKGG) the composition is skewed to low complexity.

This sequence belongs to the universal ribosomal protein uL3 family. Part of the 50S ribosomal subunit. Forms a cluster with proteins L14 and L19. Post-translationally, methylated by PrmB.

In terms of biological role, one of the primary rRNA binding proteins, it binds directly near the 3'-end of the 23S rRNA, where it nucleates assembly of the 50S subunit. This chain is Large ribosomal subunit protein uL3, found in Nitrosospira multiformis (strain ATCC 25196 / NCIMB 11849 / C 71).